We begin with the raw amino-acid sequence, 79 residues long: Acyl carrier protein (79 aa).

Residues 2 to 77 (SSIEDRVKKI…QAVDYIKKHL (76 aa)) enclose the Carrier domain. Residue S37 is modified to O-(pantetheine 4'-phosphoryl)serine.

It belongs to the acyl carrier protein (ACP) family. 4'-phosphopantetheine is transferred from CoA to a specific serine of apo-ACP by AcpS. This modification is essential for activity because fatty acids are bound in thioester linkage to the sulfhydryl of the prosthetic group.

It is found in the cytoplasm. It participates in lipid metabolism; fatty acid biosynthesis. Functionally, carrier of the growing fatty acid chain in fatty acid biosynthesis. This is Acyl carrier protein from Halorhodospira halophila (strain DSM 244 / SL1) (Ectothiorhodospira halophila (strain DSM 244 / SL1)).